The sequence spans 430 residues: Adenylosuccinate synthetase (430 aa).

GTP is bound by residues 12–18 (GDEGKGK) and 40–42 (GHT). The Proton acceptor role is filled by Asp-13. Mg(2+)-binding residues include Asp-13 and Gly-40. Residues 13 to 16 (DEGK), 38 to 41 (NAGH), Thr-128, Arg-142, Gln-223, Thr-238, and Arg-302 each bind IMP. His-41 functions as the Proton donor in the catalytic mechanism. Residue 298-304 (TTTGRPR) participates in substrate binding. Residues Arg-304, 330–332 (SID), and 412–414 (SVG) each bind GTP.

This sequence belongs to the adenylosuccinate synthetase family. Homodimer. The cofactor is Mg(2+).

Its subcellular location is the cytoplasm. The enzyme catalyses IMP + L-aspartate + GTP = N(6)-(1,2-dicarboxyethyl)-AMP + GDP + phosphate + 2 H(+). Its pathway is purine metabolism; AMP biosynthesis via de novo pathway; AMP from IMP: step 1/2. Its function is as follows. Plays an important role in the de novo pathway of purine nucleotide biosynthesis. Catalyzes the first committed step in the biosynthesis of AMP from IMP. This Bacillus licheniformis (strain ATCC 14580 / DSM 13 / JCM 2505 / CCUG 7422 / NBRC 12200 / NCIMB 9375 / NCTC 10341 / NRRL NRS-1264 / Gibson 46) protein is Adenylosuccinate synthetase.